The sequence spans 392 residues: Mycofactocin maturase MftC (392 aa).

The Radical SAM core domain maps to Leu18–Arg228. The [4Fe-4S] cluster site is built by Cys32, Cys36, Cys39, Cys253, Cys260, Cys271, Cys312, Cys315, Cys321, Cys325, and Cys343. Basic and acidic residues predominate over residues Lys354–Arg367. Residues Lys354 to Lys377 form a disordered region.

The protein belongs to the radical SAM superfamily. MftC family. [4Fe-4S] cluster is required as a cofactor.

The catalysed reaction is [mycofactocin precursor peptide]-C-terminal glycyl-L-valyl-L-tyrosine + S-adenosyl-L-methionine = [mycofactocin precursor peptide]-C-terminal glycyl-N-{[2-(4-hydroxyphenyl)ethenyl]-3-methylbutanamide} + 5'-deoxyadenosine + L-methionine + CO2. The enzyme catalyses [mycofactocin precursor peptide]-C-terminal glycyl-N-{[2-(4-hydroxyphenyl)ethenyl]-3-methylbutanamide} + AH2 + S-adenosyl-L-methionine = [mycofactocin precursor peptide]-C-terminal glycyl-N-{5-[(4-hydroxyphenyl)methyl]-4,4-dimethyl-2-oxopyrrolidin-3-yl}acetamide + 5'-deoxyadenosine + L-methionine + A + H(+). Radical S-adenosylmethionine (SAM) enzyme responsible for the first step of the biosynthesis of the enzyme cofactor mycofactocin (MFT). Catalyzes two reactions at the C-terminus of the mycofactocin precursor (the MftA peptide). The first one is the oxidative decarboxylation of the C-terminal L-tyrosine of MftA, forming an unsaturated tyramine moiety. The second reaction is the cross-linking of the tyramine with the penultimate L-valine residue, forming a five-membered lactam ring. Its activity requires the presence of the MftB chaperone. Is required for the in vivo ethanol assimilation in M.smegmatis. The polypeptide is Mycofactocin maturase MftC (Mycolicibacterium smegmatis (strain ATCC 700084 / mc(2)155) (Mycobacterium smegmatis)).